A 411-amino-acid chain; its full sequence is MPAGERLPGAPAREERIVVHVDMDCFYASCERRREPALRGAPVVVGMGYEPDQTVGAVATASYEAREYGVESAQAISAALERLPRKADAPDASAAGYYRPVDMAYYESVSESVSEILHGLGDPVREVSIDEAYLDVTDRTAWDVAAGFGRHIKQRIARSVGVPASVGIAPDMSTAKLASDHEKPDGLVVVPPESVQSFLAPLDVADLHGVGPVHARALRERGIETVGELADADPYVLEAAFGERGREFHRRARGADSRPVEPRGKPKSLSRESSFDGATESFDRVREQAAALSGAVADRASRTNASYRTIGVKVVTPPYDVQTRAESLPGPVDDPALLEAVSQSLLDEFEGAAVRKVGVRVSNLVFSEREQATLAGFSGDETGDGGGHEGGACGGAGRGSCGGQTTLDEFT.

In terms of domain architecture, UmuC spans 18-211; it reads VVHVDMDCFY…LDVADLHGVG (194 aa). Residues aspartate 22 and aspartate 130 each contribute to the Mg(2+) site. Glutamate 131 is an active-site residue. Disordered regions lie at residues 248 to 280 and 376 to 411; these read FHRR…GATE and GFSG…DEFT. Over residues 253-274 the composition is skewed to basic and acidic residues; it reads RGADSRPVEPRGKPKSLSRESS. A compositionally biased stretch (gly residues) spans 384-402; sequence DGGGHEGGACGGAGRGSCG.

It belongs to the DNA polymerase type-Y family. In terms of assembly, monomer. It depends on Mg(2+) as a cofactor.

The protein resides in the cytoplasm. It catalyses the reaction DNA(n) + a 2'-deoxyribonucleoside 5'-triphosphate = DNA(n+1) + diphosphate. Poorly processive, error-prone DNA polymerase involved in untargeted mutagenesis. Copies undamaged DNA at stalled replication forks, which arise in vivo from mismatched or misaligned primer ends. These misaligned primers can be extended by PolIV. Exhibits no 3'-5' exonuclease (proofreading) activity. May be involved in translesional synthesis. The sequence is that of DNA polymerase IV from Halobacterium salinarum (strain ATCC 29341 / DSM 671 / R1).